A 429-amino-acid chain; its full sequence is Kynureninase (429 aa).

Residues Leu-109, Thr-110, 137–140, Asp-222, His-225, and Tyr-247 each bind pyridoxal 5'-phosphate; that span reads FPSD. Residue Lys-248 is modified to N6-(pyridoxal phosphate)lysine. Pyridoxal 5'-phosphate contacts are provided by Trp-278 and Asn-306.

Belongs to the kynureninase family. As to quaternary structure, homodimer. The cofactor is pyridoxal 5'-phosphate.

The catalysed reaction is L-kynurenine + H2O = anthranilate + L-alanine + H(+). It carries out the reaction 3-hydroxy-L-kynurenine + H2O = 3-hydroxyanthranilate + L-alanine + H(+). It participates in amino-acid degradation; L-kynurenine degradation; L-alanine and anthranilate from L-kynurenine: step 1/1. The protein operates within cofactor biosynthesis; NAD(+) biosynthesis; quinolinate from L-kynurenine: step 2/3. Functionally, catalyzes the cleavage of L-kynurenine (L-Kyn) and L-3-hydroxykynurenine (L-3OHKyn) into anthranilic acid (AA) and 3-hydroxyanthranilic acid (3-OHAA), respectively. This chain is Kynureninase, found in Salinispora tropica (strain ATCC BAA-916 / DSM 44818 / JCM 13857 / NBRC 105044 / CNB-440).